Consider the following 115-residue polypeptide: Large ribosomal subunit protein bL19 (115 aa).

Belongs to the bacterial ribosomal protein bL19 family.

This protein is located at the 30S-50S ribosomal subunit interface and may play a role in the structure and function of the aminoacyl-tRNA binding site. The protein is Large ribosomal subunit protein bL19 of Kosmotoga olearia (strain ATCC BAA-1733 / DSM 21960 / TBF 19.5.1).